Reading from the N-terminus, the 360-residue chain is WAT1-related protein At3g28070 (360 aa).

The next 10 membrane-spanning stretches (helical) occupy residues alanine 15–phenylalanine 35, isoleucine 45–phenylalanine 65, isoleucine 84–tyrosine 104, threonine 108–phenylalanine 128, serine 140–tyrosine 160, tryptophan 190–leucine 210, valine 224–glutamate 244, proline 248–valine 268, leucine 286–phenylalanine 306, and leucine 311–tryptophan 331. The region spanning glycine 30–isoleucine 158 is the EamA domain.

The protein belongs to the drug/metabolite transporter (DMT) superfamily. Plant drug/metabolite exporter (P-DME) (TC 2.A.7.4) family.

The protein resides in the membrane. This Arabidopsis thaliana (Mouse-ear cress) protein is WAT1-related protein At3g28070.